A 325-amino-acid polypeptide reads, in one-letter code: Heat-inducible transcription repressor HrcA (325 aa).

This sequence belongs to the HrcA family.

Negative regulator of class I heat shock genes (grpE-dnaK-dnaJ and groELS operons). Prevents heat-shock induction of these operons. This Staphylococcus aureus (strain bovine RF122 / ET3-1) protein is Heat-inducible transcription repressor HrcA.